A 361-amino-acid polypeptide reads, in one-letter code: Nicotinate-nucleotide--dimethylbenzimidazole phosphoribosyltransferase (361 aa).

The active-site Proton acceptor is the E315.

The protein belongs to the CobT family.

It carries out the reaction 5,6-dimethylbenzimidazole + nicotinate beta-D-ribonucleotide = alpha-ribazole 5'-phosphate + nicotinate + H(+). The protein operates within nucleoside biosynthesis; alpha-ribazole biosynthesis; alpha-ribazole from 5,6-dimethylbenzimidazole: step 1/2. Catalyzes the synthesis of alpha-ribazole-5'-phosphate from nicotinate mononucleotide (NAMN) and 5,6-dimethylbenzimidazole (DMB). This is Nicotinate-nucleotide--dimethylbenzimidazole phosphoribosyltransferase from Clostridium perfringens (strain 13 / Type A).